The sequence spans 372 residues: N-methyl-L-tryptophan oxidase (372 aa).

Position 4 to 34 (4 to 34) interacts with FAD; the sequence is DLIIIGSGSVGAAAGYYATRAGLKVLMTDAH. An S-8alpha-FAD cysteine modification is found at Cys-307.

This sequence belongs to the MSOX/MTOX family. MTOX subfamily. As to quaternary structure, monomer. FAD serves as cofactor.

The catalysed reaction is N(alpha)-methyl-L-tryptophan + O2 + H2O = L-tryptophan + formaldehyde + H2O2. In terms of biological role, catalyzes the oxidative demethylation of N-methyl-L-tryptophan. This is N-methyl-L-tryptophan oxidase from Salmonella dublin (strain CT_02021853).